The primary structure comprises 255 residues: 4-hydroxy-tetrahydrodipicolinate reductase (255 aa).

NAD(+)-binding positions include 8–13 (GATGRV), 88–90 (GTT), and 112–115 (ATNM). His144 functions as the Proton donor/acceptor in the catalytic mechanism. His145 is a (S)-2,3,4,5-tetrahydrodipicolinate binding site. Lys148 functions as the Proton donor in the catalytic mechanism. A (S)-2,3,4,5-tetrahydrodipicolinate-binding site is contributed by 154–155 (GT).

This sequence belongs to the DapB family.

It localises to the cytoplasm. It catalyses the reaction (S)-2,3,4,5-tetrahydrodipicolinate + NAD(+) + H2O = (2S,4S)-4-hydroxy-2,3,4,5-tetrahydrodipicolinate + NADH + H(+). The catalysed reaction is (S)-2,3,4,5-tetrahydrodipicolinate + NADP(+) + H2O = (2S,4S)-4-hydroxy-2,3,4,5-tetrahydrodipicolinate + NADPH + H(+). Its pathway is amino-acid biosynthesis; L-lysine biosynthesis via DAP pathway; (S)-tetrahydrodipicolinate from L-aspartate: step 4/4. Catalyzes the conversion of 4-hydroxy-tetrahydrodipicolinate (HTPA) to tetrahydrodipicolinate. The sequence is that of 4-hydroxy-tetrahydrodipicolinate reductase from Helicobacter hepaticus (strain ATCC 51449 / 3B1).